A 125-amino-acid chain; its full sequence is MLSLGVSIFLLVFLIPENSGLECYQCTWMKNSQSPDNCYKNLPNATACAKDMIYCVTDERYEDDEFISIRRFCSSMPMDGRCTEVGKAKDCKYSCEVDACNFSTSIEPSKVFVFSILAMGLVLHT.

The first 20 residues, 1-20, serve as a signal peptide directing secretion; it reads MLSLGVSIFLLVFLIPENSG.

Belongs to the scoloptoxin-05 family. Post-translationally, contains 4 disulfide bonds. In terms of tissue distribution, expressed by the venom gland.

It is found in the secreted. The protein is U-scoloptoxin(05)-Er1a of Ethmostigmus rubripes (Giant centipede).